The following is a 372-amino-acid chain: Anhydro-N-acetylmuramic acid kinase (372 aa).

12–19 (GTSMDALD) provides a ligand contact to ATP.

It belongs to the anhydro-N-acetylmuramic acid kinase family.

It carries out the reaction 1,6-anhydro-N-acetyl-beta-muramate + ATP + H2O = N-acetyl-D-muramate 6-phosphate + ADP + H(+). It participates in amino-sugar metabolism; 1,6-anhydro-N-acetylmuramate degradation. It functions in the pathway cell wall biogenesis; peptidoglycan recycling. Functionally, catalyzes the specific phosphorylation of 1,6-anhydro-N-acetylmuramic acid (anhMurNAc) with the simultaneous cleavage of the 1,6-anhydro ring, generating MurNAc-6-P. Is required for the utilization of anhMurNAc either imported from the medium or derived from its own cell wall murein, and thus plays a role in cell wall recycling. The sequence is that of Anhydro-N-acetylmuramic acid kinase from Coxiella burnetii (strain CbuK_Q154) (Coxiella burnetii (strain Q154)).